A 451-amino-acid polypeptide reads, in one-letter code: Methionine aminopeptidase 2-2 (451 aa).

The disordered stretch occupies residues 1 to 97 (MAAQVEDDVA…PRVLISDLFP (97 aa)). The span at 19 to 28 (TKPTNGTSQP) shows a compositional bias: polar residues. Residues 35-45 (EAEDSDDDAEG) are compositionally biased toward acidic residues. Over residues 60 to 73 (KKKKKRKPRKKKKA) the composition is skewed to basic residues. Low complexity predominate over residues 74–83 (GTSATAGAKS). H204 serves as a coordination point for substrate. D224, D235, and H304 together coordinate a divalent metal cation. H312 serves as a coordination point for substrate. A divalent metal cation is bound by residues E337 and E432.

The protein belongs to the peptidase M24A family. Methionine aminopeptidase eukaryotic type 2 subfamily. Co(2+) is required as a cofactor. Requires Zn(2+) as cofactor. Mn(2+) serves as cofactor. The cofactor is Fe(2+).

It localises to the cytoplasm. The catalysed reaction is Release of N-terminal amino acids, preferentially methionine, from peptides and arylamides.. Functionally, cotranslationally removes the N-terminal methionine from nascent proteins. The N-terminal methionine is often cleaved when the second residue in the primary sequence is small and uncharged (Met-Ala-, Cys, Gly, Pro, Ser, Thr, or Val). The chain is Methionine aminopeptidase 2-2 from Leptosphaeria maculans (strain JN3 / isolate v23.1.3 / race Av1-4-5-6-7-8) (Blackleg fungus).